Here is a 274-residue protein sequence, read N- to C-terminus: Coagulation factor IX (274 aa).

Tyrosine 23 bears the Sulfotyrosine mark. Asparagine 25 is a glycosylation site (N-linked (GlcNAc...) asparagine). Serine 26 is subject to Phosphoserine. A glycan (N-linked (GlcNAc...) asparagine) is linked at asparagine 35. An O-linked (GalNAc...) threonine glycan is attached at threonine 37. The N-linked (GlcNAc...) asparagine glycan is linked to asparagine 40. The region spanning 49-274 (VVGGEDAARG…IYTKVSRYEV (226 aa)) is the Peptidase S1 domain. Cysteine 74 and cysteine 90 are joined by a disulfide. The active-site Charge relay system is the histidine 89. Glutamate 103, asparagine 105, glutamate 110, and glutamate 113 together coordinate Ca(2+). N-linked (GlcNAc...) asparagine glycosylation occurs at asparagine 128. Catalysis depends on aspartate 137, which acts as the Charge relay system. Cystine bridges form between cysteine 204–cysteine 218 and cysteine 229–cysteine 257. Catalysis depends on serine 233, which acts as the Charge relay system.

Belongs to the peptidase S1 family. Heterodimer of a light chain and a heavy chain; disulfide-linked. Interacts (inactive and activated) with F11 (activated) in calcium-dependent manner. Interacts with SERPINC1. In terms of processing, activated by factor XIa, which excises the activation peptide. The propeptide can also be removed by snake venom protease. Activated by coagulation factor VIIa-tissue factor (F7-F3) complex in calcium-dependent manner.

The protein localises to the secreted. It carries out the reaction Selective cleavage of Arg-|-Ile bond in factor X to form factor Xa.. Functionally, factor IX is a vitamin K-dependent plasma protein that participates in the intrinsic pathway of blood coagulation by converting factor X to its active form in the presence of Ca(2+) ions, phospholipids, and factor VIIIa. The chain is Coagulation factor IX (F9) from Ovis aries (Sheep).